A 488-amino-acid chain; its full sequence is MLETDSQRLRVVEDSLGKINVPLERYYGAQTARSLGNFNVCTRSDTMPLQIVYSLAMIKEVAACTNFKLGRISSKLSDAIVKACREVYHGQHDNEFPLVIWQTGSGTQTNMNVNEVLSSRASELIDGSRSSRLTVHPNDHVNLGQSSNDIFPTAMNLSIAMETAWKVLPSLNHLINVLKIKMHEFMNVIKIGRTHMQDAVPMSVGQELSGYVSQLQQAVDSIKSQLPLICHLAVGGTAVGTGLNCSKGFDEELCVSLTQLTDRLYRTMYKESTPVVDLIFKPAENKFAALAGHDALLQLSGCFNTTATALMRLSNDFCLLSSGPNCGLSEFVLPANEPGSSIMPGKVNPTQCESLRMVCLQIMGNHFTTSMAASQGQLELNVCKPLIAANLLHTCELLTDSTRCFADKCVRDLQLNREKIQEYVDKSLMLVTVLTPHIGYDLSAKLVQHASKFKKGLRESAIELNLLCGEKFDEIVKPMEMAFPHNNK.

5 residues coordinate (S)-malate: S105, S147, N148, T194, and H195. H195 serves as the catalytic Proton donor/acceptor. S340 is an active-site residue. The (S)-malate site is built by S341, K346, and N348.

Belongs to the class-II fumarase/aspartase family. Fumarase subfamily. Homotetramer.

The protein resides in the cytoplasm. It is found in the cytosol. The enzyme catalyses (S)-malate = fumarate + H2O. Functionally, catalyzes the reversible stereospecific interconversion of fumarate to L-malate. Fumarate metabolism in the cytosol plays a role during urea cycle and arginine metabolism; fumarate being a by-product of the urea cycle and amino-acid catabolism. The sequence is that of Fumarate hydratase from Schistosoma mansoni (Blood fluke).